Consider the following 162-residue polypeptide: Probable chemoreceptor glutamine deamidase CheD 2 (162 aa).

The protein belongs to the CheD family.

The catalysed reaction is L-glutaminyl-[protein] + H2O = L-glutamyl-[protein] + NH4(+). Functionally, probably deamidates glutamine residues to glutamate on methyl-accepting chemotaxis receptors (MCPs), playing an important role in chemotaxis. The polypeptide is Probable chemoreceptor glutamine deamidase CheD 2 (Geobacter metallireducens (strain ATCC 53774 / DSM 7210 / GS-15)).